A 256-amino-acid polypeptide reads, in one-letter code: Ribonuclease 3 (256 aa).

The RNase III domain maps to Leu3–Gly125. Mg(2+) is bound at residue Glu38. Asp42 is an active-site residue. The Mg(2+) site is built by Asp111 and Glu114. Residue Glu114 is part of the active site. In terms of domain architecture, DRBM spans Asp152–Lys222. A disordered region spans residues Arg230–Glu256.

The protein belongs to the ribonuclease III family. Homodimer. Mg(2+) is required as a cofactor.

The protein localises to the cytoplasm. The enzyme catalyses Endonucleolytic cleavage to 5'-phosphomonoester.. Digests double-stranded RNA. Involved in the processing of primary rRNA transcript to yield the immediate precursors to the large and small rRNAs (23S and 16S). Processes some mRNAs, and tRNAs when they are encoded in the rRNA operon. Processes pre-crRNA and tracrRNA of type II CRISPR loci if present in the organism. This Cupriavidus necator (strain ATCC 17699 / DSM 428 / KCTC 22496 / NCIMB 10442 / H16 / Stanier 337) (Ralstonia eutropha) protein is Ribonuclease 3.